A 359-amino-acid chain; its full sequence is MSGLEHGDASSPVPESDAELAFEGALRPRSLSEFVGQVKVRGQLELLLTAAAMQNRSPDHILLAGPPGLGKTTLAMIVAEESRRPLRLTSGPAIQHAGDLAAVLSALVPGEILFVDEIHRMARSAEEMLYLAMEDYRIDIMVGKGAGATSIPLELSPFTLVGATTRSGMLPSPLRDRFGFTAHLEFYETHELEQVIERAARMLHLEIEHEAVAEIAGRCRGTPRIANRLLRRVRDYALVHGTEAGLESVRAALDLYDVDPLGLDRLDRAVMRGILTRFGGGPVGLNTLAVSVGEEAETIESVVEPFLVRIGLVTRTPRGRVATPAAWEHFGLEAPAAPGAPARASGPASVAGALFGDEL.

Residues 1–187 form a large ATPase domain (RuvB-L) region; it reads MSGLEHGDAS…FGFTAHLEFY (187 aa). ATP-binding positions include L26, R27, G68, K71, T72, T73, 134 to 136, R177, Y187, and R224; that span reads EDY. Residue T72 coordinates Mg(2+). Residues 188-257 are small ATPAse domain (RuvB-S); the sequence is ETHELEQVIE…SVRAALDLYD (70 aa). Residues 260 to 359 form a head domain (RuvB-H) region; the sequence is PLGLDRLDRA…VAGALFGDEL (100 aa). Positions 315 and 320 each coordinate DNA.

Belongs to the RuvB family. Homohexamer. Forms an RuvA(8)-RuvB(12)-Holliday junction (HJ) complex. HJ DNA is sandwiched between 2 RuvA tetramers; dsDNA enters through RuvA and exits via RuvB. An RuvB hexamer assembles on each DNA strand where it exits the tetramer. Each RuvB hexamer is contacted by two RuvA subunits (via domain III) on 2 adjacent RuvB subunits; this complex drives branch migration. In the full resolvosome a probable DNA-RuvA(4)-RuvB(12)-RuvC(2) complex forms which resolves the HJ.

It localises to the cytoplasm. It catalyses the reaction ATP + H2O = ADP + phosphate + H(+). The RuvA-RuvB-RuvC complex processes Holliday junction (HJ) DNA during genetic recombination and DNA repair, while the RuvA-RuvB complex plays an important role in the rescue of blocked DNA replication forks via replication fork reversal (RFR). RuvA specifically binds to HJ cruciform DNA, conferring on it an open structure. The RuvB hexamer acts as an ATP-dependent pump, pulling dsDNA into and through the RuvAB complex. RuvB forms 2 homohexamers on either side of HJ DNA bound by 1 or 2 RuvA tetramers; 4 subunits per hexamer contact DNA at a time. Coordinated motions by a converter formed by DNA-disengaged RuvB subunits stimulates ATP hydrolysis and nucleotide exchange. Immobilization of the converter enables RuvB to convert the ATP-contained energy into a lever motion, pulling 2 nucleotides of DNA out of the RuvA tetramer per ATP hydrolyzed, thus driving DNA branch migration. The RuvB motors rotate together with the DNA substrate, which together with the progressing nucleotide cycle form the mechanistic basis for DNA recombination by continuous HJ branch migration. Branch migration allows RuvC to scan DNA until it finds its consensus sequence, where it cleaves and resolves cruciform DNA. This chain is Holliday junction branch migration complex subunit RuvB, found in Clavibacter michiganensis subsp. michiganensis (strain NCPPB 382).